The chain runs to 211 residues: Uridine kinase (211 aa).

15-22 (GGSGSGKT) lines the ATP pocket.

It belongs to the uridine kinase family.

It is found in the cytoplasm. The enzyme catalyses uridine + ATP = UMP + ADP + H(+). The catalysed reaction is cytidine + ATP = CMP + ADP + H(+). It functions in the pathway pyrimidine metabolism; CTP biosynthesis via salvage pathway; CTP from cytidine: step 1/3. It participates in pyrimidine metabolism; UMP biosynthesis via salvage pathway; UMP from uridine: step 1/1. This is Uridine kinase from Latilactobacillus sakei subsp. sakei (strain 23K) (Lactobacillus sakei subsp. sakei).